A 284-amino-acid polypeptide reads, in one-letter code: Bifunctional protein FolD (284 aa).

NADP(+) contacts are provided by residues 166–168 and isoleucine 232; that span reads GAS.

It belongs to the tetrahydrofolate dehydrogenase/cyclohydrolase family. As to quaternary structure, homodimer.

The enzyme catalyses (6R)-5,10-methylene-5,6,7,8-tetrahydrofolate + NADP(+) = (6R)-5,10-methenyltetrahydrofolate + NADPH. The catalysed reaction is (6R)-5,10-methenyltetrahydrofolate + H2O = (6R)-10-formyltetrahydrofolate + H(+). The protein operates within one-carbon metabolism; tetrahydrofolate interconversion. Catalyzes the oxidation of 5,10-methylenetetrahydrofolate to 5,10-methenyltetrahydrofolate and then the hydrolysis of 5,10-methenyltetrahydrofolate to 10-formyltetrahydrofolate. The protein is Bifunctional protein FolD of Shewanella pealeana (strain ATCC 700345 / ANG-SQ1).